Consider the following 282-residue polypeptide: MKLAVYGKGGIGKSTTSCNISVALAKRGKKVLQIGCDPKHDSTFTLTGHLIPTIIDTLQEKDFHYEDIWPEDVIYKGYAGVDCVEAGGPPAGAGCGGYVVGETVKLLKELNAFDEYDIILFDVLGDVVCGGFASPLNYADYCLIVTDNGFDALFAANRIAASVREKARTHQLRLAGLIGNRTTKSDLIEKYTENVPIPILQLLPLIEDIRISRVKGKTLFEMSESNPELSPICDYYLNIADQILAKPEGIIPNEVLDRDLFTLLSDFYLNMDSSESSNLTLV.

ATP is bound by residues 10–15 and Lys39; that span reads GIGKST. Ser14 is a binding site for Mg(2+). The [4Fe-4S] cluster site is built by Cys95 and Cys129. ATP is bound at residue 180-181; sequence NR.

This sequence belongs to the NifH/BchL/ChlL family. As to quaternary structure, homodimer. Protochlorophyllide reductase is composed of three subunits; ChlL, ChlN and ChlB. [4Fe-4S] cluster is required as a cofactor.

Its subcellular location is the plastid. It localises to the cyanelle. The catalysed reaction is chlorophyllide a + oxidized 2[4Fe-4S]-[ferredoxin] + 2 ADP + 2 phosphate = protochlorophyllide a + reduced 2[4Fe-4S]-[ferredoxin] + 2 ATP + 2 H2O. It participates in porphyrin-containing compound metabolism; chlorophyll biosynthesis (light-independent). In terms of biological role, component of the dark-operative protochlorophyllide reductase (DPOR) that uses Mg-ATP and reduced ferredoxin to reduce ring D of protochlorophyllide (Pchlide) to form chlorophyllide a (Chlide). This reaction is light-independent. The L component serves as a unique electron donor to the NB-component of the complex, and binds Mg-ATP. This chain is Light-independent protochlorophyllide reductase iron-sulfur ATP-binding protein, found in Cyanophora paradoxa.